A 121-amino-acid polypeptide reads, in one-letter code: Small ribosomal subunit protein uS13 (121 aa).

A disordered region spans residues 93–121 (RHLPVRGQNTKNNARTRKGPAVSIAGKKK).

This sequence belongs to the universal ribosomal protein uS13 family. As to quaternary structure, part of the 30S ribosomal subunit. Forms a loose heterodimer with protein S19. Forms two bridges to the 50S subunit in the 70S ribosome.

In terms of biological role, located at the top of the head of the 30S subunit, it contacts several helices of the 16S rRNA. In the 70S ribosome it contacts the 23S rRNA (bridge B1a) and protein L5 of the 50S subunit (bridge B1b), connecting the 2 subunits; these bridges are implicated in subunit movement. Contacts the tRNAs in the A and P-sites. The sequence is that of Small ribosomal subunit protein uS13 from Ligilactobacillus salivarius (strain UCC118) (Lactobacillus salivarius).